The sequence spans 2319 residues: Neurogenic locus notch homolog protein 3 (2319 aa).

Residues 1 to 14 (MGPGARGRRRRRRL) are compositionally biased toward basic residues. Residues 1-20 (MGPGARGRRRRRRLMALPPP) are disordered. A signal peptide spans 1–40 (MGPGARGRRRRRRLMALPPPPPPMRALPLLLLLLAGLGAA). EGF-like domains lie at 41–79 (APPC…ERCQ), 80–120 (LEDP…PDCS), and 121–158 (LPDP…RNCR). The Extracellular segment spans residues 41–1645 (APPCLDGSPC…LEPPEQSVPL (1605 aa)). Disulfide bonds link C44/C56, C50/C67, C69/C78, C84/C95, C89/C108, C110/C119, C125/C136, C130/C146, C148/C157, C164/C176, C170/C185, C187/C196, C203/C214, C208/C224, C226/C235, C242/C253, C247/C262, C264/C273, C280/C293, C287/C302, C304/C313, C320/C331, C325/C340, C342/C351, C357/C368, C362/C379, C381/C390, C397/C410, C404/C419, C421/C430, C437/C448, C442/C457, C459/C468, C475/C486, C480/C495, C497/C506, C513/C524, C518/C533, C535/C544, C551/C561, C556/C570, C572/C581, C588/C599, C593/C608, C610/C619, C626/C636, C631/C645, C647/C656, C663/C674, C668/C683, C685/C694, C701/C711, C706/C720, C722/C731, C740/C751, C745/C760, C762/C771, C777/C788, C782/C798, C800/C809, C816/C828, C822/C837, C839/C848, C855/C866, C860/C875, C877/C886, C893/C903, C898/C912, C914/C923, C930/C941, C935/C950, C952/C961, C968/C979, C973/C988, C990/C999, C1006/C1017, C1011/C1024, C1026/C1035, C1042/C1063, C1057/C1072, C1074/C1083, C1090/C1101, C1095/C1110, C1112/C1121, C1128/C1139, C1133/C1148, C1150/C1159, C1166/C1184, C1178/C1193, C1195/C1204, C1211/C1224, C1216/C1234, C1236/C1245, C1252/C1263, C1257/C1277, C1279/C1288, C1295/C1306, C1300/C1315, and C1317/C1326. Residues 160 to 197 (DIDECRAGASCRHGGTCINTPGSFHCLCPLGYTGLLCE) form the EGF-like 4; calcium-binding domain. One can recognise an EGF-like 5 domain in the interval 199–236 (PIVPCAPSPCRNGGTCRQSSDVTYDCACLPGFEGQNCE). The EGF-like 6; calcium-binding domain maps to 238-274 (NVDDCPGHRCLNGGTCVDGVNTYNCQCPPEWTGQFCT). In terms of domain architecture, EGF-like 7 spans 276 to 314 (DVDECQLQPNACHNGGTCFNLLGGHSCVCVNGWTGESCS). The region spanning 316 to 352 (NIDDCATAVCFHGATCHDRVASFYCACPMGKTGLLCH) is the EGF-like 8; calcium-binding domain. The EGF-like 9 domain occupies 353 to 391 (LDDACVSNPCHEDAICDTNPVSGRAICTCPPGFTGGACD). The EGF-like 10; calcium-binding domain maps to 393-431 (DVDECSIGANPCEHLGRCVNTQGSFLCQCGRGYTGPRCE). An EGF-like 11; calcium-binding domain is found at 433-469 (DVNECLSGPCRNQATCLDRIGQFTCICMAGFTGTFCE). In terms of domain architecture, EGF-like 12; calcium-binding spans 471–507 (DIDECQSSPCVNGGVCKDRVNGFSCTCPSGFSGSTCQ). An EGF-like 13; calcium-binding domain is found at 509-545 (DVDECASTPCRNGAKCVDQPDGYECRCAEGFEGTLCE). The region spanning 547–582 (NVDDCSPDPCHHGRCVDGIASFSCACAPGYTGIRCE) is the EGF-like 14; calcium-binding domain. In terms of domain architecture, EGF-like 15; calcium-binding spans 584 to 620 (QVDECRSQPCRYGGKCLDLVDKYLCRCPPGTTGVNCE). The EGF-like 16; calcium-binding domain occupies 622-657 (NIDDCASNPCTFGVCRDGINRYDCVCQPGFTGPLCN). The 37-residue stretch at 659–695 (EINECASSPCGEGGSCVDGENGFHCLCPPGSLPPLCL) folds into the EGF-like 17; calcium-binding domain. EGF-like domains follow at residues 697 to 732 (ANHP…PRCS), 736 to 772 (APDA…HQCE), and 773 to 810 (VLSP…PRCQ). The EGF-like 21; calcium-binding domain maps to 812–849 (DVDECAGASPCGPHGTCTNLPGSFRCICHGGYTGPFCD). An EGF-like 22; calcium-binding domain is found at 851–887 (DIDDCDPNPCLNGGSCQDGVGSFSCSCLSGFAGPRCA). In terms of domain architecture, EGF-like 23; calcium-binding spans 889 to 924 (DVDECLSSPCGPGTCTDHVASFTCTCPPGYGGFHCE). EGF-like domains are found at residues 926 to 962 (DLLD…THCQ), 964 to 1000 (KVDP…NQCQ), 1002 to 1036 (PVDW…PLCD), 1038 to 1084 (PSLP…SHCE), and 1086 to 1122 (EVDP…DSCE). In terms of domain architecture, EGF-like 29; calcium-binding spans 1124 to 1160 (DVDECASQPCQNGGSCIDLVAHYLCSCPPGTLGVLCE). One can recognise an EGF-like 30; calcium-binding domain in the interval 1162 to 1205 (NEDDCGPGPSLDSGLRCLHNGTCVDLVGGFRCNCPPGYTGLHCE). N1181 carries N-linked (GlcNAc...) asparagine glycosylation. EGF-like domains follow at residues 1207–1246 (DINE…PRCQ), 1248–1289 (ALFP…LRCE), 1291–1327 (VARS…PSCR), and 1337–1375 (TNTS…PRCE). N1338 carries an N-linked (GlcNAc...) asparagine glycan. 12 disulfides stabilise this stretch: C1341-C1352, C1346-C1363, C1365-C1374, C1389-C1412, C1394-C1407, C1403-C1419, C1430-C1453, C1435-C1448, C1444-C1460, C1469-C1495, C1477-C1490, and C1486-C1502. LNR repeat units follow at residues 1389–1429 (CPRA…PWRQ), 1430–1467 (CEAL…GRDR), and 1469–1507 (CNPV…SEVP). N1440 is a glycosylation site (N-linked (GlcNAc...) asparagine). Residues 1646 to 1666 (LPLLVAGAVFLLVIFVLGVMV) form a helical membrane-spanning segment. The Cytoplasmic portion of the chain corresponds to 1667–2319 (ARRKREHSTL…EVTPKRQVMA (653 aa)). ANK repeat units follow at residues 1840-1869 (TGET…DTNA), 1873-1903 (SGRT…DLDA), 1907-1936 (DGST…DVNA), 1940-1969 (LGKS…NKDM), and 1973-2002 (KEET…NREI). Disordered stretches follow at residues 2026–2046 (LDQP…PLLC) and 2059–2129 (QSGT…EGPY). The segment covering 2029-2046 (PSGPRSPSGPHGLGPLLC) has biased composition (low complexity). R2175 is modified (omega-N-methylarginine). Positions 2197–2319 (LNPATPVSPH…EVTPKRQVMA (123 aa)) are disordered. Positions 2263 to 2288 (SLSDWSDSTPSPATATSATAAGALPA) are enriched in low complexity. Residues 2297-2306 (SLPQSQTQLG) are compositionally biased toward polar residues.

This sequence belongs to the NOTCH family. As to quaternary structure, heterodimer of a C-terminal fragment N(TM) and a N-terminal fragment N(EC) which are probably linked by disulfide bonds. Interacts with MAML1, MAML2 and MAML3 which act as transcriptional coactivators for NOTCH3. Interacts with PSMA1. Interacts with HIF1AN. Synthesized in the endoplasmic reticulum as an inactive form which is proteolytically cleaved by a furin-like convertase in the trans-Golgi network before it reaches the plasma membrane to yield an active, ligand-accessible form. Cleavage results in a C-terminal fragment N(TM) and a N-terminal fragment N(EC). Following ligand binding, it is cleaved by TNF-alpha converting enzyme (TACE) to yield a membrane-associated intermediate fragment called notch extracellular truncation (NEXT). This fragment is then cleaved by presenilin dependent gamma-secretase to release a notch-derived peptide containing the intracellular domain (NICD) from the membrane. Post-translationally, phosphorylated. In terms of processing, hydroxylated by HIF1AN. In terms of tissue distribution, expressed in postnatal central nervous system (CNS) germinal zones and, in early postnatal life, within numerous cells throughout the CNS. It is more highly localized to ventricular germinal zones.

The protein resides in the cell membrane. Its subcellular location is the nucleus. Functions as a receptor for membrane-bound ligands Jagged1, Jagged2 and Delta1 to regulate cell-fate determination. Upon ligand activation through the released notch intracellular domain (NICD) it forms a transcriptional activator complex with RBPJ/RBPSUH and activates genes of the enhancer of split locus. Affects the implementation of differentiation, proliferation and apoptotic programs. Acts instructively to control the cell fate determination of CNS multipotent progenitor cells, resulting in astroglial induction and neuron/oligodendrocyte suppression. The chain is Neurogenic locus notch homolog protein 3 (Notch3) from Rattus norvegicus (Rat).